The primary structure comprises 372 residues: PqqA peptide cyclase (372 aa).

Residues 4–220 (APPPLSVLLE…ETARRQLGDR (217 aa)) enclose the Radical SAM core domain. Positions 18, 22, and 25 each coordinate [4Fe-4S] cluster. The tract at residues 342–372 (ATAEQESASPAPAFIYRRPERPAAATADPLE) is disordered.

It belongs to the radical SAM superfamily. PqqE family. As to quaternary structure, interacts with PqqD. The interaction is necessary for activity of PqqE. [4Fe-4S] cluster serves as cofactor.

It carries out the reaction [PQQ precursor protein] + S-adenosyl-L-methionine = E-Y cross-linked-[PQQ precursor protein] + 5'-deoxyadenosine + L-methionine + H(+). The protein operates within cofactor biosynthesis; pyrroloquinoline quinone biosynthesis. Its function is as follows. Catalyzes the cross-linking of a glutamate residue and a tyrosine residue in the PqqA protein as part of the biosynthesis of pyrroloquinoline quinone (PQQ). This Xanthomonas euvesicatoria pv. vesicatoria (strain 85-10) (Xanthomonas campestris pv. vesicatoria) protein is PqqA peptide cyclase.